We begin with the raw amino-acid sequence, 283 residues long: 4-diphosphocytidyl-2-C-methyl-D-erythritol kinase (283 aa).

Lys10 is a catalytic residue. Residue 99-109 (PMGGGLGGGSS) coordinates ATP. Residue Asp141 is part of the active site.

It belongs to the GHMP kinase family. IspE subfamily. As to quaternary structure, homodimer.

It catalyses the reaction 4-CDP-2-C-methyl-D-erythritol + ATP = 4-CDP-2-C-methyl-D-erythritol 2-phosphate + ADP + H(+). It participates in isoprenoid biosynthesis; isopentenyl diphosphate biosynthesis via DXP pathway; isopentenyl diphosphate from 1-deoxy-D-xylulose 5-phosphate: step 3/6. Catalyzes the phosphorylation of the position 2 hydroxy group of 4-diphosphocytidyl-2C-methyl-D-erythritol. This Shigella dysenteriae serotype 1 (strain Sd197) protein is 4-diphosphocytidyl-2-C-methyl-D-erythritol kinase.